A 198-amino-acid polypeptide reads, in one-letter code: Peroxynitrite isomerase (198 aa).

Positions 20 to 26 (GVWEGTG) match the GXWXGXG motif. His-189 provides a ligand contact to heme b.

This sequence belongs to the nitrobindin family. As to quaternary structure, homodimer. Heme b serves as cofactor.

The enzyme catalyses peroxynitrite = nitrate. Its pathway is nitrogen metabolism. Functionally, heme-binding protein able to scavenge peroxynitrite and to protect free L-tyrosine against peroxynitrite-mediated nitration, by acting as a peroxynitrite isomerase that converts peroxynitrite to nitrate. Therefore, this protein likely plays a role in peroxynitrite sensing and in the detoxification of reactive nitrogen and oxygen species (RNS and ROS, respectively). Is able to bind nitric oxide (NO) in vitro, but may act as a sensor of peroxynitrite levels in vivo. The polypeptide is Peroxynitrite isomerase (Leifsonia xyli subsp. xyli (strain CTCB07)).